A 100-amino-acid polypeptide reads, in one-letter code: NADH-quinone oxidoreductase subunit K (100 aa).

The next 3 membrane-spanning stretches (helical) occupy residues Leu-4–Ile-24, Leu-28–Val-48, and Ile-60–Leu-80.

The protein belongs to the complex I subunit 4L family. As to quaternary structure, NDH-1 is composed of 13 different subunits. Subunits NuoA, H, J, K, L, M, N constitute the membrane sector of the complex.

The protein localises to the cell inner membrane. It catalyses the reaction a quinone + NADH + 5 H(+)(in) = a quinol + NAD(+) + 4 H(+)(out). NDH-1 shuttles electrons from NADH, via FMN and iron-sulfur (Fe-S) centers, to quinones in the respiratory chain. The immediate electron acceptor for the enzyme in this species is believed to be ubiquinone. Couples the redox reaction to proton translocation (for every two electrons transferred, four hydrogen ions are translocated across the cytoplasmic membrane), and thus conserves the redox energy in a proton gradient. The polypeptide is NADH-quinone oxidoreductase subunit K (Klebsiella pneumoniae (strain 342)).